Consider the following 265-residue polypeptide: MKPTTISHLRQWKQEQRKFATITAYDASFSRLFFEQGIRVMLVGDSLGMTVQGHDSTLPVTTSDIVYHTQCVRRGAPLALVLSDMPFMTYATPEQTFSQAAELMRAGANMVKLEGGSWLAPTVKMLTERAVPVCGHLGLTPQSVNIFGGYKIQGRSESDANQLLADALALEEAGAQLLVLECVPVALAKRVTDALSIPVIGIGAGNVTDGQILVMHDAFGITGDNTPKFAKNFLAQSGGDIRAAVGLYAQEVEQGIYPAEEHSFH.

Mg(2+)-binding residues include D45 and D84. 3-methyl-2-oxobutanoate is bound by residues 45–46, D84, and K112; that span reads DS. E114 is a binding site for Mg(2+). The Proton acceptor role is filled by E181.

The protein belongs to the PanB family. In terms of assembly, homodecamer; pentamer of dimers. Mg(2+) is required as a cofactor.

The protein resides in the cytoplasm. It carries out the reaction 3-methyl-2-oxobutanoate + (6R)-5,10-methylene-5,6,7,8-tetrahydrofolate + H2O = 2-dehydropantoate + (6S)-5,6,7,8-tetrahydrofolate. It participates in cofactor biosynthesis; (R)-pantothenate biosynthesis; (R)-pantoate from 3-methyl-2-oxobutanoate: step 1/2. In terms of biological role, catalyzes the reversible reaction in which hydroxymethyl group from 5,10-methylenetetrahydrofolate is transferred onto alpha-ketoisovalerate to form ketopantoate. The polypeptide is 3-methyl-2-oxobutanoate hydroxymethyltransferase (Pectobacterium carotovorum subsp. carotovorum (strain PC1)).